Here is a 134-residue protein sequence, read N- to C-terminus: MGMLTEFKEFAMRGNVIDLAVGVVIGAAFGKIVTALVEKIIMPPLGMLIGKVDFSQLAWTLSPASIGADGKEIPAVVIGYGDFINTLIQFVIVAFAIFLVIKVINRLSRKQDAAPAAPAEEVVLLREIRDSLKK.

Transmembrane regions (helical) follow at residues 16 to 36 (VIDL…VTAL) and 84 to 104 (INTL…IKVI).

The protein belongs to the MscL family. As to quaternary structure, homopentamer.

Its subcellular location is the cell inner membrane. Functionally, channel that opens in response to stretch forces in the membrane lipid bilayer. May participate in the regulation of osmotic pressure changes within the cell. This Stenotrophomonas maltophilia (strain R551-3) protein is Large-conductance mechanosensitive channel.